Reading from the N-terminus, the 303-residue chain is Cilia- and flagella-associated protein 161 (303 aa).

In terms of assembly, microtubule inner protein component of sperm flagellar doublet microtubules.

It is found in the cytoplasm. The protein localises to the cytoskeleton. Its subcellular location is the cilium axoneme. The protein resides in the flagellum axoneme. Its function is as follows. Microtubule inner protein (MIP) part of the dynein-decorated doublet microtubules (DMTs) in cilia axoneme, which is required for motile cilia beating. This Mus musculus (Mouse) protein is Cilia- and flagella-associated protein 161.